The primary structure comprises 101 residues: Fructose-bisphosphate aldolase (101 aa).

Lys11 serves as the catalytic Schiff-base intermediate with dihydroxyacetone-P.

It belongs to the class I fructose-bisphosphate aldolase family.

It carries out the reaction beta-D-fructose 1,6-bisphosphate = D-glyceraldehyde 3-phosphate + dihydroxyacetone phosphate. It functions in the pathway carbohydrate degradation; glycolysis; D-glyceraldehyde 3-phosphate and glycerone phosphate from D-glucose: step 4/4. The protein is Fructose-bisphosphate aldolase of Lymnaea stagnalis (Great pond snail).